The chain runs to 460 residues: Bifunctional protein GlmU (460 aa).

A pyrophosphorylase region spans residues 1 to 229; that stretch reads MTNYAIILAA…FNESLGVNDR (229 aa). UDP-N-acetyl-alpha-D-glucosamine is bound by residues 8-11, Lys22, Gln72, and 77-78; these read LAAG and GT. Asp102 serves as a coordination point for Mg(2+). Gly139, Glu154, Asn169, and Asn227 together coordinate UDP-N-acetyl-alpha-D-glucosamine. Asn227 contributes to the Mg(2+) binding site. The segment at 230–250 is linker; that stretch reads VALATAETVMRQRITQKHMVN. The segment at 251–460 is N-acetyltransferase; that stretch reads GVTFQNPETV…RLAHHPSRSK (210 aa). Residues Arg332 and Lys350 each contribute to the UDP-N-acetyl-alpha-D-glucosamine site. His362 functions as the Proton acceptor in the catalytic mechanism. Positions 365 and 376 each coordinate UDP-N-acetyl-alpha-D-glucosamine. Residues Ala379, 385-386, Ser404, Ala422, and Arg439 each bind acetyl-CoA; that span reads NY.

This sequence in the N-terminal section; belongs to the N-acetylglucosamine-1-phosphate uridyltransferase family. The protein in the C-terminal section; belongs to the transferase hexapeptide repeat family. As to quaternary structure, homotrimer. The cofactor is Mg(2+).

The protein resides in the cytoplasm. The catalysed reaction is alpha-D-glucosamine 1-phosphate + acetyl-CoA = N-acetyl-alpha-D-glucosamine 1-phosphate + CoA + H(+). It carries out the reaction N-acetyl-alpha-D-glucosamine 1-phosphate + UTP + H(+) = UDP-N-acetyl-alpha-D-glucosamine + diphosphate. It functions in the pathway nucleotide-sugar biosynthesis; UDP-N-acetyl-alpha-D-glucosamine biosynthesis; N-acetyl-alpha-D-glucosamine 1-phosphate from alpha-D-glucosamine 6-phosphate (route II): step 2/2. It participates in nucleotide-sugar biosynthesis; UDP-N-acetyl-alpha-D-glucosamine biosynthesis; UDP-N-acetyl-alpha-D-glucosamine from N-acetyl-alpha-D-glucosamine 1-phosphate: step 1/1. The protein operates within bacterial outer membrane biogenesis; LPS lipid A biosynthesis. Its function is as follows. Catalyzes the last two sequential reactions in the de novo biosynthetic pathway for UDP-N-acetylglucosamine (UDP-GlcNAc). The C-terminal domain catalyzes the transfer of acetyl group from acetyl coenzyme A to glucosamine-1-phosphate (GlcN-1-P) to produce N-acetylglucosamine-1-phosphate (GlcNAc-1-P), which is converted into UDP-GlcNAc by the transfer of uridine 5-monophosphate (from uridine 5-triphosphate), a reaction catalyzed by the N-terminal domain. The protein is Bifunctional protein GlmU of Streptococcus pyogenes serotype M6 (strain ATCC BAA-946 / MGAS10394).